Reading from the N-terminus, the 110-residue chain is Probable ribonuclease HepT (110 aa).

Active-site residues include Arg-75 and His-80. Residues 75 to 82 (RDKLIHAY) carry the RX(4)HXY motif motif. Tyr-82 bears the O-di-AMP-tyrosine mark.

It belongs to the HepT RNase toxin family. Modified by cognate antitoxin MntA; probably at least 2 successive AMPylation events occur on Tyr-82.

Toxic component of a type VII toxin-antitoxin (TA) system. Overexpression in E.coli inhibits cell growth. Neutralized by cognate antitoxin MntA. Neutralization is probably due to AMPylation by MntA. Probably an RNAase. The chain is Probable ribonuclease HepT from Thermococcus cleftensis (strain DSM 27260 / KACC 17922 / CL1).